A 268-amino-acid chain; its full sequence is tRNA pseudouridine synthase A (268 aa).

D52 functions as the Nucleophile in the catalytic mechanism. Residue Y113 coordinates substrate.

This sequence belongs to the tRNA pseudouridine synthase TruA family. Homodimer.

It carries out the reaction uridine(38/39/40) in tRNA = pseudouridine(38/39/40) in tRNA. Functionally, formation of pseudouridine at positions 38, 39 and 40 in the anticodon stem and loop of transfer RNAs. The chain is tRNA pseudouridine synthase A from Chlamydia abortus (strain DSM 27085 / S26/3) (Chlamydophila abortus).